Here is a 365-residue protein sequence, read N- to C-terminus: Probable caffeine synthase 5 (365 aa).

Tyr18 contacts S-adenosyl-L-homocysteine. Thr25 is a caffeine binding site. S-adenosyl-L-homocysteine is bound by residues Cys61, Asn66, Asp98, Leu99, Ser134, and Phe135. Caffeine is bound by residues Tyr152, His155, and Trp156. Asn173, Asp259, Phe261, and Asn262 together coordinate Mg(2+). Phe317 serves as a coordination point for caffeine.

The protein belongs to the methyltransferase superfamily. Type-7 methyltransferase family. It depends on Mg(2+) as a cofactor.

The protein operates within alkaloid biosynthesis. Functionally, may be involved in the biosynthesis of caffeine. The sequence is that of Probable caffeine synthase 5 from Camellia sinensis (Tea plant).